Consider the following 252-residue polypeptide: Ribosomal RNA small subunit methyltransferase J (252 aa).

Residues 101-102 (RD), 117-118 (ER), 153-154 (SS), and D171 each bind S-adenosyl-L-methionine.

It belongs to the methyltransferase superfamily. RsmJ family.

Its subcellular location is the cytoplasm. It carries out the reaction guanosine(1516) in 16S rRNA + S-adenosyl-L-methionine = N(2)-methylguanosine(1516) in 16S rRNA + S-adenosyl-L-homocysteine + H(+). Functionally, specifically methylates the guanosine in position 1516 of 16S rRNA. In Salmonella typhimurium (strain LT2 / SGSC1412 / ATCC 700720), this protein is Ribosomal RNA small subunit methyltransferase J.